Reading from the N-terminus, the 304-residue chain is Ornithine carbamoyltransferase (304 aa).

Carbamoyl phosphate is bound by residues 51–54, Gln-78, Arg-102, and 129–132; these read STRT and HPVQ. Residues Asn-157, Asp-221, and 225 to 226 contribute to the L-ornithine site; that span reads SM. Residues 261–262 and Arg-289 each bind carbamoyl phosphate; that span reads CL.

The protein belongs to the aspartate/ornithine carbamoyltransferase superfamily. OTCase family.

It is found in the cytoplasm. The catalysed reaction is carbamoyl phosphate + L-ornithine = L-citrulline + phosphate + H(+). It functions in the pathway amino-acid degradation; L-arginine degradation via ADI pathway; carbamoyl phosphate from L-arginine: step 2/2. In terms of biological role, reversibly catalyzes the transfer of the carbamoyl group from carbamoyl phosphate (CP) to the N(epsilon) atom of ornithine (ORN) to produce L-citrulline. The protein is Ornithine carbamoyltransferase of Campylobacter curvus (strain 525.92).